Consider the following 37-residue polypeptide: Large ribosomal subunit protein bL36 (37 aa).

Belongs to the bacterial ribosomal protein bL36 family.

This is Large ribosomal subunit protein bL36 from Geobacillus kaustophilus (strain HTA426).